Reading from the N-terminus, the 232-residue chain is uncharacterized protein (232 aa).

Disordered stretches follow at residues 123–147 and 169–200; these read VAGGKHSSNRRPRGTIRAVPGRKYP and AAADPQERVGPRGRRGLAGQQQCRGRPGPSLR.

It belongs to the mycobacterial PPE family.

This is an uncharacterized protein from Mycobacterium tuberculosis (strain ATCC 25618 / H37Rv).